Reading from the N-terminus, the 1450-residue chain is DNA-directed RNA polymerase III subunit rpc1 (1450 aa).

Residues Cys-67, Cys-70, Cys-77, His-80, Cys-107, Cys-110, and Cys-154 each coordinate Zn(2+). The Mg(2+) site is built by Asp-491, Asp-493, and Asp-495. Positions 832 to 844 (PTEFFFHTMGGRE) are bridging helix.

It belongs to the RNA polymerase beta' chain family. Component of the RNA polymerase III (Pol III) complex consisting of 17 subunits.

The protein resides in the nucleus. It catalyses the reaction RNA(n) + a ribonucleoside 5'-triphosphate = RNA(n+1) + diphosphate. Functionally, DNA-dependent RNA polymerase catalyzes the transcription of DNA into RNA using the four ribonucleoside triphosphates as substrates. Largest and catalytic core component of RNA polymerase III which synthesizes small RNAs, such as 5S rRNA and tRNAs. Forms the polymerase active center together with the second largest subunit. A single-stranded DNA template strand of the promoter is positioned within the central active site cleft of Pol III. A bridging helix emanates from RPC1 and crosses the cleft near the catalytic site and is thought to promote translocation of Pol III by acting as a ratchet that moves the RNA-DNA hybrid through the active site by switching from straight to bent conformations at each step of nucleotide addition. In Dictyostelium discoideum (Social amoeba), this protein is DNA-directed RNA polymerase III subunit rpc1 (polr3a).